A 231-amino-acid chain; its full sequence is Small ribosomal subunit protein uS3 (231 aa).

A KH type-2 domain is found at 39 to 107 (IRKFLKAKLY…DVTINIKEER (69 aa)).

Belongs to the universal ribosomal protein uS3 family. Part of the 30S ribosomal subunit. Forms a tight complex with proteins S10 and S14.

Binds the lower part of the 30S subunit head. Binds mRNA in the 70S ribosome, positioning it for translation. In Campylobacter hominis (strain ATCC BAA-381 / DSM 21671 / CCUG 45161 / LMG 19568 / NCTC 13146 / CH001A), this protein is Small ribosomal subunit protein uS3.